We begin with the raw amino-acid sequence, 401 residues long: Zinc finger CCHC domain-containing protein 12 (401 aa).

Disordered regions lie at residues 1–20 and 270–292; these read MASI…PLPP and DSDE…SAGP. The segment covering 270-282 has biased composition (acidic residues); it reads DSDEDVILVEPDD. The segment at 345–362 adopts a CCHC-type zinc-finger fold; sequence VHCSHCGEEGHSKETCDN.

Belongs to the ZCCHC12 family. In terms of assembly, interacts with SMAD1 and CREB-binding protein (CBP). Forms a protein-DNA complex through its association with SMAD1.

Transcriptional coactivator in the bone morphogenetic protein (BMP)-signaling pathway. It positively modulates BMP signaling by interacting with SMAD1 and associating with CBP in the transcription complex. It contributes to the BMP-induced enhancement of cholinergic-neuron-specific gene expression. This chain is Zinc finger CCHC domain-containing protein 12 (Zcchc12), found in Rattus norvegicus (Rat).